Consider the following 206-residue polypeptide: Ribosomal RNA large subunit methyltransferase E (206 aa).

Residues Gly60, Trp62, Asp80, Asp96, and Asp121 each contribute to the S-adenosyl-L-methionine site. The active-site Proton acceptor is the Lys161.

It belongs to the class I-like SAM-binding methyltransferase superfamily. RNA methyltransferase RlmE family.

The protein resides in the cytoplasm. The enzyme catalyses uridine(2552) in 23S rRNA + S-adenosyl-L-methionine = 2'-O-methyluridine(2552) in 23S rRNA + S-adenosyl-L-homocysteine + H(+). Its function is as follows. Specifically methylates the uridine in position 2552 of 23S rRNA at the 2'-O position of the ribose in the fully assembled 50S ribosomal subunit. The sequence is that of Ribosomal RNA large subunit methyltransferase E from Legionella pneumophila (strain Paris).